The chain runs to 123 residues: KQFTKCELSQVLKSMDGYKGVTLPEWICTIFHSSGYDTQTIVKNNGKTEYGLFQINNKMWCRDNQILPSRNICGISCDKFLDDDLTDDVMCAKKILDSEGIDYWLAHKPLCSEKLEQWLCEEL.

A C-type lysozyme domain is found at 1–123 (KQFTKCELSQ…KLEQWLCEEL (123 aa)). 4 disulfide bridges follow: Cys-6–Cys-120, Cys-28–Cys-111, Cys-61–Cys-77, and Cys-73–Cys-91. Residues Lys-79, Asp-82, Asp-84, Asp-87, and Asp-88 each contribute to the Ca(2+) site.

The protein belongs to the glycosyl hydrolase 22 family. In terms of assembly, lactose synthase (LS) is a heterodimer of a catalytic component, beta1,4-galactosyltransferase (beta4Gal-T1) and a regulatory component, alpha-lactalbumin (LA). In terms of tissue distribution, mammary gland specific. Secreted in milk.

The protein resides in the secreted. In terms of biological role, regulatory subunit of lactose synthase, changes the substrate specificity of galactosyltransferase in the mammary gland making glucose a good acceptor substrate for this enzyme. This enables LS to synthesize lactose, the major carbohydrate component of milk. In other tissues, galactosyltransferase transfers galactose onto the N-acetylglucosamine of the oligosaccharide chains in glycoproteins. This Equus caballus (Horse) protein is Alpha-lactalbumin A.